The sequence spans 856 residues: DNA mismatch repair protein MutS (856 aa).

600 to 607 (GPNMSGKS) provides a ligand contact to ATP.

Belongs to the DNA mismatch repair MutS family.

Functionally, this protein is involved in the repair of mismatches in DNA. It is possible that it carries out the mismatch recognition step. This protein has a weak ATPase activity. The chain is DNA mismatch repair protein MutS from Lactobacillus acidophilus (strain ATCC 700396 / NCK56 / N2 / NCFM).